We begin with the raw amino-acid sequence, 299 residues long: 4-diphosphocytidyl-2-C-methyl-D-erythritol kinase (299 aa).

Lys18 is a catalytic residue. 104–114 (PIASGIGGGSS) provides a ligand contact to ATP. Residue Asp146 is part of the active site.

This sequence belongs to the GHMP kinase family. IspE subfamily.

It carries out the reaction 4-CDP-2-C-methyl-D-erythritol + ATP = 4-CDP-2-C-methyl-D-erythritol 2-phosphate + ADP + H(+). Its pathway is isoprenoid biosynthesis; isopentenyl diphosphate biosynthesis via DXP pathway; isopentenyl diphosphate from 1-deoxy-D-xylulose 5-phosphate: step 3/6. Functionally, catalyzes the phosphorylation of the position 2 hydroxy group of 4-diphosphocytidyl-2C-methyl-D-erythritol. The sequence is that of 4-diphosphocytidyl-2-C-methyl-D-erythritol kinase from Brucella melitensis biotype 1 (strain ATCC 23456 / CCUG 17765 / NCTC 10094 / 16M).